The sequence spans 44 residues: Hyaluronidase CdtHya1 (44 aa).

This sequence belongs to the glycosyl hydrolase 56 family. As to quaternary structure, monomer. In terms of processing, contains disulfide bonds. Glycosylated. In terms of tissue distribution, expressed by the venom gland.

It is found in the secreted. The catalysed reaction is Random hydrolysis of (1-&gt;4)-linkages between N-acetyl-beta-D-glucosamine and D-glucuronate residues in hyaluronate.. Functionally, snake venom endo-hyaluronidase that degrades hyaluronan to smaller oligosaccharide fragments. In venom, it is not toxic by itself, but increases the diffusion of other venom proteins such as crotoxin (a neurotoxic and myotoxic PLA2) by degrading the extracellular matrix. In addition, it displays antiedematogenic activity, since it significantly diminishes the oedematogenic activity of crotoxin (probably by direct substrate hydrolysis, since hyaluronan possesses strong water-binding capacity). This chain is Hyaluronidase CdtHya1, found in Crotalus durissus terrificus (South American rattlesnake).